The following is a 434-amino-acid chain: UDP-N-acetylglucosamine 1-carboxyvinyltransferase (434 aa).

A phosphoenolpyruvate-binding site is contributed by Lys22–Asn23. Arg97 contributes to the UDP-N-acetyl-alpha-D-glucosamine binding site. The active-site Proton donor is the Asp121. Asp319 and Met341 together coordinate UDP-N-acetyl-alpha-D-glucosamine.

It belongs to the EPSP synthase family. MurA subfamily.

The protein localises to the cytoplasm. The catalysed reaction is phosphoenolpyruvate + UDP-N-acetyl-alpha-D-glucosamine = UDP-N-acetyl-3-O-(1-carboxyvinyl)-alpha-D-glucosamine + phosphate. It participates in cell wall biogenesis; peptidoglycan biosynthesis. In terms of biological role, cell wall formation. Adds enolpyruvyl to UDP-N-acetylglucosamine. The sequence is that of UDP-N-acetylglucosamine 1-carboxyvinyltransferase from Bacteroides thetaiotaomicron (strain ATCC 29148 / DSM 2079 / JCM 5827 / CCUG 10774 / NCTC 10582 / VPI-5482 / E50).